A 598-amino-acid chain; its full sequence is Elongation factor 4 (598 aa).

A tr-type G domain is found at 3–185 (QHIRNFSIIA…MIVAQIPPPE (183 aa)). Residues 15–20 (DHGKST) and 132–135 (NKID) each bind GTP.

Belongs to the TRAFAC class translation factor GTPase superfamily. Classic translation factor GTPase family. LepA subfamily.

It localises to the cell inner membrane. It catalyses the reaction GTP + H2O = GDP + phosphate + H(+). Required for accurate and efficient protein synthesis under certain stress conditions. May act as a fidelity factor of the translation reaction, by catalyzing a one-codon backward translocation of tRNAs on improperly translocated ribosomes. Back-translocation proceeds from a post-translocation (POST) complex to a pre-translocation (PRE) complex, thus giving elongation factor G a second chance to translocate the tRNAs correctly. Binds to ribosomes in a GTP-dependent manner. The protein is Elongation factor 4 of Nitrosomonas europaea (strain ATCC 19718 / CIP 103999 / KCTC 2705 / NBRC 14298).